The primary structure comprises 313 residues: Ribosomal RNA small subunit methyltransferase H (313 aa).

S-adenosyl-L-methionine-binding positions include 48–50 (GGH), aspartate 68, phenylalanine 102, aspartate 120, and glutamine 127. Residues 290-313 (TATEEEIDRNPRSRSAKLRAAARK) form a disordered region. Basic residues predominate over residues 301-313 (RSRSAKLRAAARK).

This sequence belongs to the methyltransferase superfamily. RsmH family.

The protein resides in the cytoplasm. It catalyses the reaction cytidine(1402) in 16S rRNA + S-adenosyl-L-methionine = N(4)-methylcytidine(1402) in 16S rRNA + S-adenosyl-L-homocysteine + H(+). In terms of biological role, specifically methylates the N4 position of cytidine in position 1402 (C1402) of 16S rRNA. The chain is Ribosomal RNA small subunit methyltransferase H from Koribacter versatilis (strain Ellin345).